A 350-amino-acid chain; its full sequence is MASTGSQASDIDKIFGFFNDGEPPTKKPRKLLPSLKTKKPRELVLVIGTGISAAVAPQVPALKSWKGLIQALLDAAIDFDLLEDEESKKFQKCLHEDKNLVHVAHDLIQKLSPRTSNVRSTFFKDCLYEVFDDLESKMEDSGKQLLQSVLHLMENGALVLTTNFDNLLELYAADQGKQLESLDLTDEKKVLEWAQEKRKLSVLHIHGVYTNPSGIVLHPAGYQNVLRNTEVMREIQKLYENKSFLFLGCGWTVDDTTFQALFLEAVKHKSDLEHFMLVRRGDVDEFKKLRENMLDKGIKVISYGNDYADLPEYFKRLTCEISTRGRSGMAREGQLNGSSAAHGEIRGCST.

At alanine 2 the chain carries N-acetylalanine. Serine 9 carries the post-translational modification Phosphoserine. Residues 330 to 350 (AREGQLNGSSAAHGEIRGCST) form a disordered region.

The protein belongs to the FAM118 family.

It is found in the nucleus. Its subcellular location is the cajal body. May play a role in Cajal bodies formation. In Rattus norvegicus (Rat), this protein is Protein FAM118B (Fam118b).